Here is a 600-residue protein sequence, read N- to C-terminus: Glutamine--fructose-6-phosphate aminotransferase [isomerizing] (600 aa).

Residue Cys-2 is the Nucleophile; for GATase activity of the active site. Residues 2–217 (CGIVGYIGQL…DKEMVIVTDD (216 aa)) form the Glutamine amidotransferase type-2 domain. 2 SIS domains span residues 283 to 422 (IAAA…KNGI) and 452 to 590 (IARE…VDKP). Residue Lys-595 is the For Fru-6P isomerization activity of the active site.

In terms of assembly, homodimer.

The protein resides in the cytoplasm. It carries out the reaction D-fructose 6-phosphate + L-glutamine = D-glucosamine 6-phosphate + L-glutamate. Functionally, catalyzes the first step in hexosamine metabolism, converting fructose-6P into glucosamine-6P using glutamine as a nitrogen source. The sequence is that of Glutamine--fructose-6-phosphate aminotransferase [isomerizing] (glmS) from Bacillus spizizenii (strain ATCC 23059 / NRRL B-14472 / W23) (Bacillus subtilis subsp. spizizenii).